The sequence spans 366 residues: Histidinol-phosphate aminotransferase (366 aa).

Lysine 228 bears the N6-(pyridoxal phosphate)lysine mark.

The protein belongs to the class-II pyridoxal-phosphate-dependent aminotransferase family. Histidinol-phosphate aminotransferase subfamily. Homodimer. Pyridoxal 5'-phosphate serves as cofactor.

The catalysed reaction is L-histidinol phosphate + 2-oxoglutarate = 3-(imidazol-4-yl)-2-oxopropyl phosphate + L-glutamate. The protein operates within amino-acid biosynthesis; L-histidine biosynthesis; L-histidine from 5-phospho-alpha-D-ribose 1-diphosphate: step 7/9. The chain is Histidinol-phosphate aminotransferase from Campylobacter fetus subsp. fetus (strain 82-40).